The primary structure comprises 378 residues: Alginate lyase (378 aa).

The first 28 residues, 1–28 (MQTPKLIRPTLLSMAIVSSMAWATGASA), serve as a signal peptide directing secretion. Substrate-binding positions include 67-68 (SK), 140-141 (HT), and Y258.

The protein belongs to the polysaccharide lyase 5 family.

Its subcellular location is the periplasm. The catalysed reaction is Eliminative cleavage of alginate to give oligosaccharides with 4-deoxy-alpha-L-erythro-hex-4-enuronosyl groups at their non-reducing ends and beta-D-mannuronate at their reducing end.. Functionally, catalyzes the depolymerization of alginate by cleaving the beta-1,4 glycosidic bond between two adjacent sugar residues via a beta-elimination mechanism. May serve to degrade mislocalized alginate that is trapped in the periplasmic space. This chain is Alginate lyase, found in Pseudomonas syringae pv. tomato (strain ATCC BAA-871 / DC3000).